We begin with the raw amino-acid sequence, 777 residues long: MNTKILETLEFNKIKDLFQGSLQTEQGKLELQVLQPTTKKEAIERAFLEVTDMEQILVEDPHFHLAATKDITAISKRLELDGDLNIEELLVLKKVLRVSHDLVTFYNDLENVRLQELNRIFENLVDFPAIQGSLLAVNDGGFIESFASEELGRIRRKIQENESKVRDLLQEILKNKGDMLADQVVASRNGRNVLPVKNTYRNRIPGVVHDISASGTTIYIEPRAVVNLNEEISNYKADERYELLRILQELSAMIRPHAAEIANNAWIIGHLDLVMAKLAFMRERGAVVPAISDTQAIQLLQVRHPLIQNAVANDLHFGPDLTEIVITGPNTGGKTIMLKTLGLAQIMAQSGLPILADKGSRVGIFSQIFADIGDEQSIEQSLSTFSSHMTNIVSILEQVDSESLVLLDELGAGTDPQEGAALAIAILEDLRLRQIKTMATTHYPELKAYGIETDWVENASMEFDTDSLRPTYRFMQGVPGRSNAFEIARRLGLSEVIVSHAQEQTNTDSDVNQIIERLEEQTLESRKRLDNIREVEQENLKFNRALKKLYNEFNREKETELNKARLEAQEIVDLALSESESILKNLHAKSSLKPHEIIEAKAQLKKLAPETVDLSKNKVLKQAKKNRAPKVGDDILVTSYGQRGTLVKLLKDGRWEAQVGLIKMTLEEQEFNLLKAEKEQQPKRKQVNVVKRANTAGPRARLDLRGKRYEEAMKELDEFIDQALLNNMAQVDIIHGIGTGVIREGVNKYLRRNKHVKSFGYAPQNAGGSGATIVIFK.

ATP is bound at residue 328-335 (GPNTGGKT). The 76-residue stretch at 702 to 777 (LDLRGKRYEE…GSGATIVIFK (76 aa)) folds into the Smr domain.

It belongs to the DNA mismatch repair MutS family. MutS2 subfamily. As to quaternary structure, homodimer. Binds to stalled ribosomes, contacting rRNA.

In terms of biological role, endonuclease that is involved in the suppression of homologous recombination and thus may have a key role in the control of bacterial genetic diversity. Acts as a ribosome collision sensor, splitting the ribosome into its 2 subunits. Detects stalled/collided 70S ribosomes which it binds and splits by an ATP-hydrolysis driven conformational change. Acts upstream of the ribosome quality control system (RQC), a ribosome-associated complex that mediates the extraction of incompletely synthesized nascent chains from stalled ribosomes and their subsequent degradation. Probably generates substrates for RQC. In Streptococcus gordonii (strain Challis / ATCC 35105 / BCRC 15272 / CH1 / DL1 / V288), this protein is Endonuclease MutS2.